The following is a 167-amino-acid chain: CASP-like protein 3 (167 aa).

Residues 1 to 2 lie on the Cytoplasmic side of the membrane; that stretch reads MK. A helical membrane pass occupies residues 3 to 23; that stretch reads IIAIAPRIGAAVLSLVAFSVM. Over 24 to 48 the chain is Extracellular; the sequence is ASTGERRSGAGSTFKVKFSDFQAYN. The chain crosses the membrane as a helical span at residues 49–69; the sequence is YLIALNVILFVYSTVQLVMLV. At 70–80 the chain is on the cytoplasmic side; sequence NSNHNSSFSSP. The helical transmembrane segment at 81–101 threads the bilayer; it reads FKWVLGVYICDQLLAFLLFSA. The Extracellular portion of the chain corresponds to 102 to 137; that stretch reads SSSAATASELSRHGLHNIWPPACATWKLWTFCSKAE. Residues 138 to 158 form a helical membrane-spanning segment; it reads AAVAMSFLSSFFIITSSILSG. Over 159 to 167 the chain is Cytoplasmic; sequence YHLSKVPAV.

The protein belongs to the Casparian strip membrane proteins (CASP) family. In terms of assembly, homodimer and heterodimers.

The protein localises to the cell membrane. The chain is CASP-like protein 3 from Osmunda lancea (Fern).